Reading from the N-terminus, the 425-residue chain is Enolase (425 aa).

A (2R)-2-phosphoglycerate-binding site is contributed by Gln-162. Residue Glu-204 is the Proton donor of the active site. Residues Asp-241, Glu-282, and Asp-309 each coordinate Mg(2+). Residues Lys-334, Arg-363, Ser-364, and Lys-385 each coordinate (2R)-2-phosphoglycerate. The active-site Proton acceptor is Lys-334.

It belongs to the enolase family. Requires Mg(2+) as cofactor.

Its subcellular location is the cytoplasm. It localises to the secreted. The protein localises to the cell surface. The catalysed reaction is (2R)-2-phosphoglycerate = phosphoenolpyruvate + H2O. It participates in carbohydrate degradation; glycolysis; pyruvate from D-glyceraldehyde 3-phosphate: step 4/5. In terms of biological role, catalyzes the reversible conversion of 2-phosphoglycerate (2-PG) into phosphoenolpyruvate (PEP). It is essential for the degradation of carbohydrates via glycolysis. This Corynebacterium glutamicum (strain R) protein is Enolase.